Here is a 37-residue protein sequence, read N- to C-terminus: Large ribosomal subunit protein bL36 (37 aa).

Belongs to the bacterial ribosomal protein bL36 family.

This Endomicrobium trichonymphae protein is Large ribosomal subunit protein bL36.